A 109-amino-acid polypeptide reads, in one-letter code: Ig kappa chain V region K16-167 (109 aa).

Residues 1 to 23 are framework-1; that stretch reads ALVMTQTPSPVSAAVGGTVTISC. A complementarity-determining-1 region spans residues 24-35; the sequence is QASQSVYSNNLS. Positions 36–50 are framework-2; sequence WFQQKPGQPPKLLIY. Positions 51–57 are complementarity-determining-2; that stretch reads KASTLAS. The framework-3 stretch occupies residues 58-89; sequence GVPSRFKGSGSGTQFTLPISGVECDDAATYYC. A complementarity-determining-3 region spans residues 90-99; sequence QGTNTGNNIV. Positions 100-109 are framework-4; sequence FGTGTEVVVK.

In Oryctolagus cuniculus (Rabbit), this protein is Ig kappa chain V region K16-167.